The following is a 356-amino-acid chain: Glutamine synthetase cytosolic isozyme 2 (356 aa).

The 81-residue stretch at 19–99 (IIAEYIWIGG…VMCDTYTPAG (81 aa)) folds into the GS beta-grasp domain. The GS catalytic domain occupies 106–356 (KRHNAAKIFS…IAESTILWKP (251 aa)).

Belongs to the glutamine synthetase family. As to quaternary structure, homooctamer.

It localises to the cytoplasm. The enzyme catalyses L-glutamate + NH4(+) + ATP = L-glutamine + ADP + phosphate + H(+). The sequence is that of Glutamine synthetase cytosolic isozyme 2 (GS1-2) from Vitis vinifera (Grape).